Consider the following 226-residue polypeptide: Protein DEHYDRATION-INDUCED 19 (226 aa).

Positions 158 to 208 (FPTSDTEETSKPPISIPDDASVIKETPAQPWDSSIDSSLTREEREQKRKQA) are disordered. Positions 196–205 (LTREEREQKR) are enriched in basic and acidic residues.

Belongs to the Di19 family.

In Oryza sativa subsp. japonica (Rice), this protein is Protein DEHYDRATION-INDUCED 19 (DI19-1).